A 225-amino-acid chain; its full sequence is Ribosome maturation factor RimM (225 aa).

Residues 144–225 (ADEFYWVDLI…RIVVDWEADY (82 aa)) form the PRC barrel domain.

The protein belongs to the RimM family. In terms of assembly, binds ribosomal protein uS19.

It is found in the cytoplasm. In terms of biological role, an accessory protein needed during the final step in the assembly of 30S ribosomal subunit, possibly for assembly of the head region. Essential for efficient processing of 16S rRNA. May be needed both before and after RbfA during the maturation of 16S rRNA. It has affinity for free ribosomal 30S subunits but not for 70S ribosomes. The protein is Ribosome maturation factor RimM of Burkholderia orbicola (strain AU 1054).